The primary structure comprises 356 residues: S-adenosylmethionine:tRNA ribosyltransferase-isomerase (356 aa).

It belongs to the QueA family. As to quaternary structure, monomer.

It localises to the cytoplasm. It catalyses the reaction 7-aminomethyl-7-carbaguanosine(34) in tRNA + S-adenosyl-L-methionine = epoxyqueuosine(34) in tRNA + adenine + L-methionine + 2 H(+). The protein operates within tRNA modification; tRNA-queuosine biosynthesis. In terms of biological role, transfers and isomerizes the ribose moiety from AdoMet to the 7-aminomethyl group of 7-deazaguanine (preQ1-tRNA) to give epoxyqueuosine (oQ-tRNA). This is S-adenosylmethionine:tRNA ribosyltransferase-isomerase from Escherichia coli (strain ATCC 8739 / DSM 1576 / NBRC 3972 / NCIMB 8545 / WDCM 00012 / Crooks).